Reading from the N-terminus, the 394-residue chain is Ornithine aminotransferase 1 (394 aa).

K252 is modified (N6-(pyridoxal phosphate)lysine).

It belongs to the class-III pyridoxal-phosphate-dependent aminotransferase family. OAT subfamily. The cofactor is pyridoxal 5'-phosphate.

The protein resides in the cytoplasm. The catalysed reaction is a 2-oxocarboxylate + L-ornithine = L-glutamate 5-semialdehyde + an L-alpha-amino acid. Its pathway is amino-acid biosynthesis; L-proline biosynthesis; L-glutamate 5-semialdehyde from L-ornithine: step 1/1. Functionally, catalyzes the interconversion of ornithine to glutamate semialdehyde. This is Ornithine aminotransferase 1 from Staphylococcus aureus (strain Mu50 / ATCC 700699).